The sequence spans 173 residues: Crossover junction endodeoxyribonuclease RuvC (173 aa).

Residues Asp8, Glu67, and Asp139 contribute to the active site. Mg(2+) contacts are provided by Asp8, Glu67, and Asp139.

It belongs to the RuvC family. As to quaternary structure, homodimer which binds Holliday junction (HJ) DNA. The HJ becomes 2-fold symmetrical on binding to RuvC with unstacked arms; it has a different conformation from HJ DNA in complex with RuvA. In the full resolvosome a probable DNA-RuvA(4)-RuvB(12)-RuvC(2) complex forms which resolves the HJ. Mg(2+) serves as cofactor.

The protein resides in the cytoplasm. The enzyme catalyses Endonucleolytic cleavage at a junction such as a reciprocal single-stranded crossover between two homologous DNA duplexes (Holliday junction).. The RuvA-RuvB-RuvC complex processes Holliday junction (HJ) DNA during genetic recombination and DNA repair. Endonuclease that resolves HJ intermediates. Cleaves cruciform DNA by making single-stranded nicks across the HJ at symmetrical positions within the homologous arms, yielding a 5'-phosphate and a 3'-hydroxyl group; requires a central core of homology in the junction. The consensus cleavage sequence is 5'-(A/T)TT(C/G)-3'. Cleavage occurs on the 3'-side of the TT dinucleotide at the point of strand exchange. HJ branch migration catalyzed by RuvA-RuvB allows RuvC to scan DNA until it finds its consensus sequence, where it cleaves and resolves the cruciform DNA. The protein is Crossover junction endodeoxyribonuclease RuvC of Psychromonas ingrahamii (strain DSM 17664 / CCUG 51855 / 37).